The following is a 73-amino-acid chain: Mu-scoloptoxin(15)-Ssd1a (73 aa).

Positions 1–20 (MKFHIIFCLLAALMMTSAFA) are cleaved as a signal peptide.

In terms of processing, contains 2 disulfide bonds. Expressed by the venom gland.

The protein resides in the secreted. Its function is as follows. Voltage-gated sodium channel inhibitor. This is Mu-scoloptoxin(15)-Ssd1a from Scolopendra dehaani (Thai centipede).